A 400-amino-acid chain; its full sequence is Nicotinate phosphoribosyltransferase (400 aa).

Histidine 220 is modified (phosphohistidine; by autocatalysis).

This sequence belongs to the NAPRTase family. Transiently phosphorylated on a His residue during the reaction cycle. Phosphorylation strongly increases the affinity for substrates and increases the rate of nicotinate D-ribonucleotide production. Dephosphorylation regenerates the low-affinity form of the enzyme, leading to product release.

The catalysed reaction is nicotinate + 5-phospho-alpha-D-ribose 1-diphosphate + ATP + H2O = nicotinate beta-D-ribonucleotide + ADP + phosphate + diphosphate. It participates in cofactor biosynthesis; NAD(+) biosynthesis; nicotinate D-ribonucleotide from nicotinate: step 1/1. Its function is as follows. Catalyzes the synthesis of beta-nicotinate D-ribonucleotide from nicotinate and 5-phospho-D-ribose 1-phosphate at the expense of ATP. The chain is Nicotinate phosphoribosyltransferase from Cronobacter sakazakii (strain ATCC BAA-894) (Enterobacter sakazakii).